Consider the following 434-residue polypeptide: UDP-N-acetylglucosamine 1-carboxyvinyltransferase (434 aa).

A phosphoenolpyruvate-binding site is contributed by 22–23 (KN). Residue Arg97 coordinates UDP-N-acetyl-alpha-D-glucosamine. Asp121 acts as the Proton donor in catalysis. UDP-N-acetyl-alpha-D-glucosamine contacts are provided by Asp319 and Met341.

This sequence belongs to the EPSP synthase family. MurA subfamily.

Its subcellular location is the cytoplasm. The enzyme catalyses phosphoenolpyruvate + UDP-N-acetyl-alpha-D-glucosamine = UDP-N-acetyl-3-O-(1-carboxyvinyl)-alpha-D-glucosamine + phosphate. It participates in cell wall biogenesis; peptidoglycan biosynthesis. Functionally, cell wall formation. Adds enolpyruvyl to UDP-N-acetylglucosamine. This chain is UDP-N-acetylglucosamine 1-carboxyvinyltransferase, found in Bacteroides fragilis (strain ATCC 25285 / DSM 2151 / CCUG 4856 / JCM 11019 / LMG 10263 / NCTC 9343 / Onslow / VPI 2553 / EN-2).